Consider the following 465-residue polypeptide: Glycine--tRNA ligase (465 aa).

Substrate is bound by residues R98 and E174. ATP contacts are provided by residues 206-208, 216-221, 290-291, and 334-337; these read RNE, FRTREF, EL, and GADR. Residue 221–225 coordinates substrate; the sequence is FEQME. 330–334 is a substrate binding site; sequence EPSLG.

Belongs to the class-II aminoacyl-tRNA synthetase family. As to quaternary structure, homodimer.

It localises to the cytoplasm. It catalyses the reaction tRNA(Gly) + glycine + ATP = glycyl-tRNA(Gly) + AMP + diphosphate. Its function is as follows. Catalyzes the attachment of glycine to tRNA(Gly). This chain is Glycine--tRNA ligase, found in Agathobacter rectalis (strain ATCC 33656 / DSM 3377 / JCM 17463 / KCTC 5835 / VPI 0990) (Eubacterium rectale).